Here is a 123-residue protein sequence, read N- to C-terminus: MAGVAAGGALGAWARHGLGSWLTALLPSTFPLPTLMINVLGALLLGFVAGYGIERGRLPEAWRLPVTVGFIGSFTTFSTWSVDTVLLLDAGRWPLALANVGISLAVGLAAVWVGRRLAFRWRV.

3 consecutive transmembrane segments (helical) span residues 30–50 (FPLPTLMINVLGALLLGFVAG), 68–88 (VGFIGSFTTFSTWSVDTVLLL), and 93–113 (WPLALANVGISLAVGLAAVWV). Na(+) is bound by residues Gly72 and Thr75.

The protein belongs to the fluoride channel Fluc/FEX (TC 1.A.43) family.

It is found in the cell membrane. The enzyme catalyses fluoride(in) = fluoride(out). With respect to regulation, na(+) is not transported, but it plays an essential structural role and its presence is essential for fluoride channel function. Functionally, fluoride-specific ion channel. Important for reducing fluoride concentration in the cell, thus reducing its toxicity. The chain is Fluoride-specific ion channel FluC 2 from Symbiobacterium thermophilum (strain DSM 24528 / JCM 14929 / IAM 14863 / T).